A 219-amino-acid polypeptide reads, in one-letter code: Uracil-DNA glycosylase (219 aa).

Asp61 acts as the Proton acceptor in catalysis.

It belongs to the uracil-DNA glycosylase (UDG) superfamily. UNG family.

Its subcellular location is the cytoplasm. It carries out the reaction Hydrolyzes single-stranded DNA or mismatched double-stranded DNA and polynucleotides, releasing free uracil.. Excises uracil residues from the DNA which can arise as a result of misincorporation of dUMP residues by DNA polymerase or due to deamination of cytosine. This Exiguobacterium sibiricum (strain DSM 17290 / CCUG 55495 / CIP 109462 / JCM 13490 / 255-15) protein is Uracil-DNA glycosylase.